The primary structure comprises 843 residues: General transcription and DNA repair factor IIH helicase/translocase subunit XPB/SSL2 (843 aa).

Residues 1–85 (MTDVEGYQPK…TAADSSMNQM (85 aa)) are disordered. Positions 26–41 (SDEDSPATDAEIDENY) are enriched in acidic residues. Basic and acidic residues predominate over residues 42 to 56 (DDNRETSEGRGERDT). Over residues 64–74 (KKPRKKTKSSR) the composition is skewed to basic residues. The Nuclear localization signal signature appears at 64–75 (KKPRKKTKSSRH). The Helicase ATP-binding domain maps to 373-535 (MFGNGRARSG…DLNFLIGPKL (163 aa)). 386-393 (LPCGAGKT) is an ATP binding site. A DEAH box motif is present at residues 488–491 (DEVH). The Helicase C-terminal domain maps to 589 to 743 (QACQFLIQYH…KVITHLHGME (155 aa)). Position 752 is a phosphoserine (Ser752).

It belongs to the helicase family. RAD25/XPB subfamily. As to quaternary structure, component of the 7-subunit TFIIH core complex composed of XPB/SSL2, XPD/RAD3, SSL1, TFB1, TFB2, TFB4 and TFB5, which is active in NER. The core complex associates with the 3-subunit CTD-kinase module TFIIK composed of CCL1, KIN28 and TFB3 to form the 10-subunit holoenzyme (holo-TFIIH) active in transcription. An additionnal subunit, TFB6, plays a role in the dissociation of the SSL2 helicase from TFIIH after transcription initiation. Interacts directly with TFB6. Mg(2+) is required as a cofactor.

The protein localises to the nucleus. It catalyses the reaction Couples ATP hydrolysis with the unwinding of duplex DNA by translocating in the 3'-5' direction.. The catalysed reaction is ATP + H2O = ADP + phosphate + H(+). ATP-dependent DNA translocase. Component of the general transcription and DNA repair factor IIH (TFIIH) core complex. When complexed to CDK-activating kinase (CAK), involved in RNA transcription by RNA polymerase II. May have 3'-5' helicase activity alone, the TFIIH core however has no 3'-5' helicase activity. Also involved in transcription-coupled nucleotide excision repair (NER) of damaged DNA. In NER, TFIIH acts by opening DNA around the lesion to allow the excision of the damaged oligonucleotide and its replacement by a new DNA fragment. The ATPase activity of XPB/SSL2, but not its helicase activity, is required for DNA opening. In transcription, TFIIH has an essential role in transcription initiation. When the pre-initiation complex (PIC) has been established, TFIIH is required for promoter opening and promoter escape. The ATP-dependent helicase activity of XPB/SSL2 is required for promoter opening and promoter escape. XPB/SSL2 acts as a double-stranded DNA translocase, promoting DNA opening by tracking in a 5'-3' dirction along the nontemplate promoter strand, rotating and inserting DNA into the Pol II active site cleft, leading to DNA unwinding. A dsDNA-stimulated ATPase, dATP and ATP are equally good substrates. May also use this translocase mechanism during DNA repair rather than physically wedging open damaged DNA. The protein is General transcription and DNA repair factor IIH helicase/translocase subunit XPB/SSL2 of Saccharomyces cerevisiae (strain ATCC 204508 / S288c) (Baker's yeast).